A 295-amino-acid chain; its full sequence is 3-methyl-2-oxobutanoate hydroxymethyltransferase (295 aa).

The Mg(2+) site is built by Asp-53 and Asp-92. Residues 53–54 (DS), Asp-92, and Lys-122 each bind 3-methyl-2-oxobutanoate. Residue Glu-124 coordinates Mg(2+). Glu-191 functions as the Proton acceptor in the catalytic mechanism.

It belongs to the PanB family. In terms of assembly, homodecamer; pentamer of dimers. The cofactor is Mg(2+).

The protein localises to the cytoplasm. It catalyses the reaction 3-methyl-2-oxobutanoate + (6R)-5,10-methylene-5,6,7,8-tetrahydrofolate + H2O = 2-dehydropantoate + (6S)-5,6,7,8-tetrahydrofolate. It functions in the pathway cofactor biosynthesis; (R)-pantothenate biosynthesis; (R)-pantoate from 3-methyl-2-oxobutanoate: step 1/2. Its function is as follows. Catalyzes the reversible reaction in which hydroxymethyl group from 5,10-methylenetetrahydrofolate is transferred onto alpha-ketoisovalerate to form ketopantoate. The sequence is that of 3-methyl-2-oxobutanoate hydroxymethyltransferase from Koribacter versatilis (strain Ellin345).